Consider the following 271-residue polypeptide: Uridine-cytidine kinase 1-A (271 aa).

ATP is bound at residue 24–32 (GGTASGKST). Substrate is bound by residues Asp81, Tyr109, His114, Arg163, Arg172, and Gln180. Asp209 lines the ATP pocket. The segment at 241–271 (SQKRTFPGQGESGGLILPGKRTHLESSSRPH) is disordered. Residues 262–271 (THLESSSRPH) are compositionally biased toward basic and acidic residues.

This sequence belongs to the uridine kinase family.

The catalysed reaction is uridine + ATP = UMP + ADP + H(+). It carries out the reaction cytidine + ATP = CMP + ADP + H(+). It participates in pyrimidine metabolism; CTP biosynthesis via salvage pathway; CTP from cytidine: step 1/3. The protein operates within pyrimidine metabolism; UMP biosynthesis via salvage pathway; UMP from uridine: step 1/1. Its function is as follows. Phosphorylates uridine and cytidine to uridine monophosphate and cytidine monophosphate. Does not phosphorylate deoxyribonucleosides or purine ribonucleosides. Can use ATP or GTP as a phosphate donor. This Xenopus laevis (African clawed frog) protein is Uridine-cytidine kinase 1-A (uck1-a).